The sequence spans 524 residues: FAD-dependent monooxygenase opdD (524 aa).

FAD is bound by residues glutamate 48 and arginine 145.

Belongs to the paxM FAD-dependent monooxygenase family.

It functions in the pathway secondary metabolite biosynthesis. Functionally, FAD-dependent monooxygenase; part of the gene cluster that mediates the biosynthesis of oxopyrrolidines, polyketide-amino acid hybrid compounds with feature structures of tetramic acid. Does not seem to play a role in oxopyrrolidines A and B biosynthesis. May be involved in further modifications of these oxopyrrolidines. In Penicillium oxalicum (strain 114-2 / CGMCC 5302) (Penicillium decumbens), this protein is FAD-dependent monooxygenase opdD.